The primary structure comprises 359 residues: Heme A synthase (359 aa).

Transmembrane regions (helical) follow at residues 8–28 (IMSI…VVGG), 94–114 (LLGR…YYLK), 124–144 (LLLI…MVKS), 159–179 (GHLL…LIII), and 215–235 (IIIF…GLDA). A heme-binding site is contributed by His274. Transmembrane regions (helical) follow at residues 276–296 (WFGI…IILN), 303–323 (MGMV…ITLV), and 328–348 (ILAA…FLFI). Position 334 (His334) interacts with heme.

This sequence belongs to the COX15/CtaA family. Type 2 subfamily. In terms of assembly, interacts with CtaB. Heme b serves as cofactor.

The protein localises to the cell membrane. The enzyme catalyses Fe(II)-heme o + 2 A + H2O = Fe(II)-heme a + 2 AH2. The protein operates within porphyrin-containing compound metabolism; heme A biosynthesis; heme A from heme O: step 1/1. Functionally, catalyzes the conversion of heme O to heme A by two successive hydroxylations of the methyl group at C8. The first hydroxylation forms heme I, the second hydroxylation results in an unstable dihydroxymethyl group, which spontaneously dehydrates, resulting in the formyl group of heme A. The sequence is that of Heme A synthase from Orientia tsutsugamushi (strain Ikeda) (Rickettsia tsutsugamushi).